Consider the following 938-residue polypeptide: Catenin delta-1 (938 aa).

M1 is modified (N-acetylmethionine). The interval 1-357 (MDDSEVESTA…ASLDSLRKGM (357 aa)) is necessary and sufficient for interaction with CCDC85B. S4 is modified (phosphoserine). The stretch at 10–46 (ASILASVKEQEAQFEKLTRALEEERRHVSAQLERVRV) forms a coiled coil. Position 47 is a phosphoserine (S47). T59 is modified (phosphothreonine). Y112 bears the Phosphotyrosine; by FYN mark. Phosphoserine is present on S125. A phosphotyrosine mark is found at Y217 and Y221. Residue S225 is modified to Phosphoserine. At Y228 the chain carries Phosphotyrosine. 2 positions are modified to phosphoserine: S230 and S252. Phosphotyrosine is present on Y257. Phosphoserine is present on residues S268 and S269. At Y280 the chain carries Phosphotyrosine. The residue at position 288 (S288) is a Phosphoserine. Y291 carries the post-translational modification Phosphotyrosine. S300 carries the phosphoserine modification. A Phosphothreonine modification is found at T304. 4 positions are modified to phosphoserine: S320, S346, S349, and S352. ARM repeat units follow at residues 358 to 395 (PPPS…HLCY), 398 to 437 (DKVK…NISF), 441 to 475 (QDNK…ITGT), and 476 to 516 (LWNL…NEDC). Residue K421 forms a Glycyl lysine isopeptide (Lys-Gly) (interchain with G-Cter in SUMO2) linkage. Residue K517 forms a Glycyl lysine isopeptide (Lys-Gly) (interchain with G-Cter in SUMO2) linkage. ARM repeat units follow at residues 534 to 573 (LRNV…DSDS), 583 to 624 (LRNL…AKKG), 653 to 693 (ARGY…NLCA), 700 to 739 (RYIR…NLAV), 740 to 780 (DARN…SILN), and 781 to 826 (TINE…ALVL). S617 bears the Phosphoserine mark. The Nuclear localization signal (NLS) signature appears at 622–629 (KKGKDEWF). S713 is subject to Phosphoserine. Residues S811, S847, S857, S859, S861, and S864 each carry the phosphoserine modification. Positions 855 to 938 (NASRSQSSHS…LKGAPLMQKI (84 aa)) are disordered. Residue Y865 is modified to Phosphotyrosine. S868 carries the phosphoserine modification. At T869 the chain carries Phosphothreonine. The segment covering 875 to 888 (RNQKSDKKPDREEI) has biased composition (basic and acidic residues). S879 bears the Phosphoserine mark. A Glycyl lysine isopeptide (Lys-Gly) (interchain with G-Cter in SUMO2) cross-link involves residue K882. The segment covering 892 to 908 (NMGSNTKSLDNNYSTLN) has biased composition (polar residues). Phosphoserine is present on S899. Phosphotyrosine is present on Y904. Residues T906 and T916 each carry the phosphothreonine modification. A compositionally biased stretch (basic and acidic residues) spans 909–922 (ERGDHNRTLDRSGD). S920 bears the Phosphoserine mark.

Belongs to the beta-catenin family. As to quaternary structure, belongs to a multiprotein cell-cell adhesion complex that also contains E-cadherin/CDH1, alpha-catenin/CTNNA1, beta-catenin/CTNNB1, and gamma-catenin/JUP. Binds to the C-terminal fragment of PSEN1 and mutually competes for CDH1. Interacts with ZBTB33. Interacts with GLIS2. Interacts with FER. Interacts with NANOS1 (via N-terminal region). Interacts (via N-terminus) with GNA12; the interaction regulates CDH1-mediated cell-cell adhesion. Interacts with GNA13. Component of a cadherin:catenin adhesion complex composed of at least of CDH26, beta-catenin/CTNNB1, alpha-catenin/CTNNA1 and p120 catenin/CTNND1. Interacts with CCDC85B. Interacts with PLPP3; negatively regulates the PLPP3-mediated stabilization of CTNNB1. Interacts with DSG3; the interaction facilitates DSG3 localization and retention at cell-cell junctions. Interacts with CTNND1/p120-catenin; the interaction controls CADH5 endocytosis. Phosphorylated by FER and other protein-tyrosine kinases. Phosphorylated at Ser-288 by PAK5. Dephosphorylated by PTPRJ. Expressed in basal keratinocytes (at protein level).

It localises to the cell junction. It is found in the adherens junction. Its subcellular location is the cytoplasm. The protein resides in the nucleus. The protein localises to the cell membrane. Its function is as follows. Key regulator of cell-cell adhesion that associates with and regulates the cell adhesion properties of both C-, E- and N-cadherins, being critical for their surface stability. Promotes localization and retention of DSG3 at cell-cell junctions, via its interaction with DSG3. Beside cell-cell adhesion, regulates gene transcription through several transcription factors including ZBTB33/Kaiso2 and GLIS2, and the activity of Rho family GTPases and downstream cytoskeletal dynamics. Implicated both in cell transformation by SRC and in ligand-induced receptor signaling through the EGF, PDGF, CSF-1 and ERBB2 receptors. In Mus musculus (Mouse), this protein is Catenin delta-1 (Ctnnd1).